The sequence spans 240 residues: MKPAYFISDLHLSEKQPELTALLLRFLRSSAAGQARAIYILGDLFDFWVGDDEVSELNTSVAREIRKLSDKGVAVFFVRGNRDFLIGQDFCRQAGMTLLPDYSVLDLFGCKTLICHGDTLCTDDRAYQRFRKIVHRKRLQKLFLMLPLKWRTRLATKIRRVSKMEKQVKPADIMDVNAAFTARQVRAFGAERLIHGHTHREHIHHENGFTRIVLGDWHNDYASILRVDGDGAVFVPLEKY.

Asp-9, His-11, Asp-43, Asn-81, and His-116 together coordinate Mn(2+). A substrate-binding site is contributed by 81-82; that stretch reads NR. 5 residues coordinate substrate: Asp-124, Ser-162, Lys-166, Lys-169, and His-197. Positions 197 and 199 each coordinate Mn(2+).

The protein belongs to the LpxH family. Requires Mn(2+) as cofactor.

The protein resides in the cell inner membrane. It catalyses the reaction UDP-2-N,3-O-bis[(3R)-3-hydroxytetradecanoyl]-alpha-D-glucosamine + H2O = 2-N,3-O-bis[(3R)-3-hydroxytetradecanoyl]-alpha-D-glucosaminyl 1-phosphate + UMP + 2 H(+). It functions in the pathway glycolipid biosynthesis; lipid IV(A) biosynthesis; lipid IV(A) from (3R)-3-hydroxytetradecanoyl-[acyl-carrier-protein] and UDP-N-acetyl-alpha-D-glucosamine: step 4/6. Functionally, hydrolyzes the pyrophosphate bond of UDP-2,3-diacylglucosamine to yield 2,3-diacylglucosamine 1-phosphate (lipid X) and UMP by catalyzing the attack of water at the alpha-P atom. Involved in the biosynthesis of lipid A, a phosphorylated glycolipid that anchors the lipopolysaccharide to the outer membrane of the cell. The polypeptide is UDP-2,3-diacylglucosamine hydrolase (Neisseria meningitidis serogroup B (strain ATCC BAA-335 / MC58)).